The sequence spans 243 residues: Retrotransposon Gag-like protein 6 (243 aa).

A compositionally biased stretch (polar residues) spans 1-12 (MVQPRTSKTESP). A disordered region spans residues 1–22 (MVQPRTSKTESPASAPGASAQM). Residues 29 to 69 (LTSLRLTNSALRREASTLRAEKANLTNMLESVMAELTLLRT) are a coiled coil. Disordered regions lie at residues 84–105 (SAIT…PEPF) and 218–243 (TGSC…GRNL). The span at 85-94 (AITSNGTRPM) shows a compositional bias: polar residues.

This sequence belongs to the LDOC1 family. As to expression, widely expressed.

In Mus musculus (Mouse), this protein is Retrotransposon Gag-like protein 6.